An 835-amino-acid polypeptide reads, in one-letter code: Replication origin-binding protein (835 aa).

One can recognise a Helicase ATP-binding domain in the interval 54-215 (PGMSQTRPVT…SGLRGDENIH (162 aa)). ATP is bound at residue 67 to 74 (APMGSGKT).

It belongs to the herpesviridae OriBP family. As to quaternary structure, homodimer. Interacts with the major DNA-binding protein. Interacts with the helicase/primase component 52 and the polymerase accessory protein.

The protein resides in the host nucleus. Its function is as follows. Functions as a docking protein to recruit essential components of the viral replication machinery to viral DNA origins. In the presence of the major DNA-binding protein, opens dsDNA leading to a conformational change in the origin that facilitates DNA unwinding and subsequent replication. This Varicella-zoster virus (strain Oka vaccine) (HHV-3) protein is Replication origin-binding protein.